Here is a 469-residue protein sequence, read N- to C-terminus: Adenosylhomocysteinase (469 aa).

Substrate-binding residues include Thr-63, Asp-139, and Glu-164. 165–167 (TTT) provides a ligand contact to NAD(+). Lys-194 and Asp-198 together coordinate substrate. Residues Asn-199, 228-233 (GYGDVG), Glu-251, Asn-300, 321-323 (IGH), and Asn-375 each bind NAD(+).

The protein belongs to the adenosylhomocysteinase family. It depends on NAD(+) as a cofactor.

It localises to the cytoplasm. It catalyses the reaction S-adenosyl-L-homocysteine + H2O = L-homocysteine + adenosine. Its pathway is amino-acid biosynthesis; L-homocysteine biosynthesis; L-homocysteine from S-adenosyl-L-homocysteine: step 1/1. May play a key role in the regulation of the intracellular concentration of adenosylhomocysteine. The protein is Adenosylhomocysteinase of Pseudomonas fluorescens (strain ATCC BAA-477 / NRRL B-23932 / Pf-5).